Consider the following 101-residue polypeptide: Small ribosomal subunit protein uS14 (101 aa).

Belongs to the universal ribosomal protein uS14 family. Part of the 30S ribosomal subunit. Contacts proteins S3 and S10.

Binds 16S rRNA, required for the assembly of 30S particles and may also be responsible for determining the conformation of the 16S rRNA at the A site. The protein is Small ribosomal subunit protein uS14 of Dechloromonas aromatica (strain RCB).